A 106-amino-acid polypeptide reads, in one-letter code: Trp operon repressor homolog (106 aa).

Residues 59 to 82 (QREIQQILNTSAATITRGSNMIKI) mediate DNA binding.

The protein belongs to the TrpR family. In terms of assembly, homodimer.

It localises to the cytoplasm. This protein is an aporepressor. When complexed with L-tryptophan it binds the operator region of the trp operon and prevents the initiation of transcription. This chain is Trp operon repressor homolog, found in Histophilus somni (strain 129Pt) (Haemophilus somnus).